Consider the following 339-residue polypeptide: Arylacetonitrilase (339 aa).

The CN hydrolase domain maps to 5–290; the sequence is IRVAVTQAEP…EGIVYADLDL (286 aa). E45 acts as the Proton acceptor in catalysis. The active site involves K126. Catalysis depends on C167, which acts as the Nucleophile.

It belongs to the carbon-nitrogen hydrolase superfamily. Nitrilase family.

The catalysed reaction is a nitrile + 2 H2O = a carboxylate + NH4(+). It carries out the reaction 4-chlorophenylacetonitrile + 2 H2O = 4-chlorophenylacetate + NH4(+). Functionally, nitrilase that hydrolyzes preferentially phenylacetonitrile, (R,S)-mandelonitrile, and 3-indolylacetonitrile. This chain is Arylacetonitrilase, found in Fusarium vanettenii (strain ATCC MYA-4622 / CBS 123669 / FGSC 9596 / NRRL 45880 / 77-13-4) (Fusarium solani subsp. pisi).